The following is a 409-amino-acid chain: tRNA (guanine-N(7)-)-methyltransferase non-catalytic subunit wuho (409 aa).

The segment at Asp48–Ala72 is disordered. Polar residues predominate over residues Thr58 to Ala72. 4 WD repeats span residues Ala72–Asn111, Met122–Pro161, Gly167–Thr206, and Gly210–Arg252.

This sequence belongs to the WD repeat TRM82 family. As to quaternary structure, forms a heterodimer with the catalytic subunit.

It is found in the nucleus. The protein operates within tRNA modification; N(7)-methylguanine-tRNA biosynthesis. Its function is as follows. Required for the formation of N(7)-methylguanine at position 46 (m7G46) in tRNA. In the complex, it is required to stabilize and induce conformational changes of the catalytic subunit. This Aedes aegypti (Yellowfever mosquito) protein is tRNA (guanine-N(7)-)-methyltransferase non-catalytic subunit wuho.